Consider the following 1505-residue polypeptide: Phosphatidylinositol 3-kinase C2 domain-containing subunit gamma (1505 aa).

The segment at 1–32 (MAYNWQTEPNRAEPQEGGHDHQQCHHADQHLS) is disordered. Positions 10–31 (NRAEPQEGGHDHQQCHHADQHL) are enriched in basic and acidic residues. Positions 278 to 370 (PSRLFADTQF…IQLHLQRSRD (93 aa)) constitute a PI3K-RBD domain. One can recognise a C2 PI3K-type domain in the interval 540 to 688 (LHSHLSFTVC…TPLTLQIDFP (149 aa)). Positions 703-879 (RTDHQEPPRE…QELLAALQFC (177 aa)) constitute a PIK helical domain. One can recognise a PI3K/PI4K catalytic domain in the interval 948-1226 (DRDACSYFTS…KIKQSLECFP (279 aa)). The interval 954–960 (YFTSNAL) is G-loop. The interval 1090–1098 (GVCDRHNDN) is catalytic loop. Residues 1109–1135 (HIDFGKFLGHAQTFGGIKRDRAPFIFT) form an activation loop region. The PX domain occupies 1259–1371 (LNKTRTIQRV…SFFLSEHIQQ (113 aa)). Residues 1384–1505 (HSPDKSPQVQ…KWYPLGNSII (122 aa)) enclose the C2 domain.

Belongs to the PI3/PI4-kinase family. As to expression, predominantly expressed in normal liver. High levels also found in regenerating liver. Very low levels found in heart and testis.

The protein localises to the membrane. The catalysed reaction is a 1,2-diacyl-sn-glycero-3-phospho-(1D-myo-inositol) + ATP = a 1,2-diacyl-sn-glycero-3-phospho-(1D-myo-inositol-3-phosphate) + ADP + H(+). It catalyses the reaction a 1,2-diacyl-sn-glycero-3-phospho-(1D-myo-inositol 4-phosphate) + ATP = a 1,2-diacyl-sn-glycero-3-phospho-(1D-myo-inositol-3,4-bisphosphate) + ADP + H(+). Generates phosphatidylinositol 3-phosphate (PtdIns3P) and phosphatidylinositol 3,4-bisphosphate (PtdIns(3,4)P2) that act as second messengers. May play a role in SDF1A-stimulated chemotaxis. The polypeptide is Phosphatidylinositol 3-kinase C2 domain-containing subunit gamma (Pik3c2g) (Rattus norvegicus (Rat)).